Reading from the N-terminus, the 298-residue chain is MQLEKMITEGSNAASAEIDRVSTLEMCRIINDEDKTVPLAVERVLPDIAAAIDVIHAQVSGGGRLIYLGAGTSGRLGILDASECPPTYGVKPGLVVGLIAGGEYAIQHAVEGAEDSREGGVNDLKNINLTAQDVVVGIAASGRTPYVIAGLEYARQLGCRTVGISCNPGSAVSTTAEFAITPIVGAEVVTGSSRMKAGTAQKLVLNMLSTGLMIKSGKVFGNLMVDVVATNEKLHVRQVNIVKNATGCNAEQAEAALIACERNCKTAIVMVLKNLDAAEAKKRLDQHGGFIRQVLDKE.

An SIS domain is found at 55 to 218; it reads IHAQVSGGGR…STGLMIKSGK (164 aa). Glutamate 83 (proton donor) is an active-site residue. Glutamate 114 is a catalytic residue.

This sequence belongs to the GCKR-like family. MurNAc-6-P etherase subfamily. As to quaternary structure, homodimer.

It carries out the reaction N-acetyl-D-muramate 6-phosphate + H2O = N-acetyl-D-glucosamine 6-phosphate + (R)-lactate. It functions in the pathway amino-sugar metabolism; 1,6-anhydro-N-acetylmuramate degradation. It participates in amino-sugar metabolism; N-acetylmuramate degradation. Its pathway is cell wall biogenesis; peptidoglycan recycling. In terms of biological role, specifically catalyzes the cleavage of the D-lactyl ether substituent of MurNAc 6-phosphate, producing GlcNAc 6-phosphate and D-lactate. Together with AnmK, is also required for the utilization of anhydro-N-acetylmuramic acid (anhMurNAc) either imported from the medium or derived from its own cell wall murein, and thus plays a role in cell wall recycling. The protein is N-acetylmuramic acid 6-phosphate etherase of Shigella boydii serotype 18 (strain CDC 3083-94 / BS512).